Consider the following 189-residue polypeptide: UPF0301 protein Plut_0637 (189 aa).

Belongs to the UPF0301 (AlgH) family.

The sequence is that of UPF0301 protein Plut_0637 from Chlorobium luteolum (strain DSM 273 / BCRC 81028 / 2530) (Pelodictyon luteolum).